We begin with the raw amino-acid sequence, 433 residues long: Voltage-gated potassium channel regulatory subunit KCNG3 (433 aa).

The Cytoplasmic segment spans residues 1–165 (MTFGRGGAAS…RTFEEPTSSL (165 aa)). Residues 166 to 187 (AAQILASVSVVFVIVSMVVLCA) traverse the membrane as a helical segment. Over 188–217 (STLPDWRAAVADNRSLDDRSRYSASPGREP) the chain is Extracellular. Residues 218 to 239 (SGIIEAICIGWFTAECIVRFIV) form a helical membrane-spanning segment. Over 240–250 (SKNKCEFVKRP) the chain is Cytoplasmic. The helical transmembrane segment at 251-271 (LNIIDLLAITPYYISVLMTVF) threads the bilayer. Residues 272-281 (TGENSQLQRA) are Extracellular-facing. Residues 282 to 302 (GVTLRVLRMMRIFWVIKLARH) traverse the membrane as a helical; Voltage-sensor segment. The Cytoplasmic portion of the chain corresponds to 303–317 (FIGLQTLGLTLKRCY). The helical transmembrane segment at 318-339 (REMAMLLVFICVAMAIFSALSQ) threads the bilayer. At 340 to 357 (LLEHGLDLETSNKDFASI) the chain is on the extracellular side. Residues 358–369 (PAACWWVIISMT) constitute an intramembrane region (helical). Residues 370–375 (TVGYGD) carry the Selectivity filter motif. An intramembrane segment occupies 370–377 (TVGYGDMY). At 378–384 (PITVPGR) the chain is on the extracellular side. Residues 385–413 (ILGGVCVVSGIVLLALPITFIYHSFVQCY) traverse the membrane as a helical segment. Residues 414–433 (HELKFRSARYSRSLSAEFLN) lie on the Cytoplasmic side of the membrane.

This sequence belongs to the potassium channel family. G (TC 1.A.1.2) subfamily. Kv6.3/KCNG3 sub-subfamily. Heterotetramer with KCNB1. Does not form homomultimers.

Its subcellular location is the cell membrane. The protein localises to the cytoplasm. Regulatory subunit of the voltage-gated potassium (Kv) channel which, when coassembled with KCNB1, modulates the kinetics parameters of the heterotetrameric channel namely the inactivation and deactivation rate. Potassium channel subunit that does not form functional channels by itself. Reduces the deactivation rate. Moderately acceleratee activation. This chain is Voltage-gated potassium channel regulatory subunit KCNG3, found in Mus musculus (Mouse).